We begin with the raw amino-acid sequence, 407 residues long: Zinc finger protein 260 (407 aa).

The interval 1-21 is disordered; that stretch reads MLESLQPESELLHDEPDPGEK. Basic and acidic residues predominate over residues 10–21; it reads ELLHDEPDPGEK. The segment at 23-45 adopts a C2H2-type 1 zinc-finger fold; the sequence is YECDECRKTFSLEQHFVEHKKTH. The C2H2-type 2; degenerate zinc-finger motif lies at 51-73; that stretch reads PECTGCGEEFSKASSLTRHLRSR. 11 consecutive C2H2-type zinc fingers follow at residues 79–101, 131–153, 159–181, 187–209, 215–237, 243–265, 271–293, 299–321, 327–349, 355–377, and 383–405; these read YKCG…QKQH, YACK…EKIH, FECN…QNVH, FKCN…QRIH, YECK…QRSH, YTCK…EKIH, YKCN…HNIH, YECN…VRIH, YECK…MRSH, YGCN…MRIH, and YQCS…QRIH.

The protein belongs to the krueppel C2H2-type zinc-finger protein family. As to quaternary structure, binds DNA. Interacts with GATA4. Expressed in both embryonic, fetal and adult heart. Also expressed in lung, skeletal muscle and adrenal glands.

Its subcellular location is the nucleus. In terms of biological role, transcription factor that acts as a cardiac regulator and an effector of alpha1-adrenergic signaling. Binds to PE response elements (PERE) present in the promoter of genes such as ANF/NPPA and acts as a direct transcriptional activator of NPPA. Also acts as a cofactor with GATA4, a key cardiac regulator. This chain is Zinc finger protein 260 (Znf260), found in Rattus norvegicus (Rat).